The sequence spans 144 residues: Histone H2B.2, sperm (144 aa).

Residues 1-51 (MPRSPAKTSPRKGSPRKGSPSRKASPKRGGKGAKRAGKGGRRRRVVKRRRR) are disordered. Short sequence motifs (SPKK motif) lie at residues 4–7 (SPAK), 9–12 (SPRK), 14–17 (SPRK), 19–22 (SPSR), and 25–28 (SPKR). Phosphoserine occurs at positions 14, 19, and 25. The span at 24-51 (ASPKRGGKGAKRAGKGGRRRRVVKRRRR) shows a compositional bias: basic residues. S131 carries an O-linked (GlcNAc) serine glycan. K139 participates in a covalent cross-link: Glycyl lysine isopeptide (Lys-Gly) (interchain with G-Cter in ubiquitin).

Belongs to the histone H2B family. The nucleosome is a histone octamer containing two molecules each of H2A, H2B, H3 and H4 assembled in one H3-H4 heterotetramer and two H2A-H2B heterodimers. The octamer wraps approximately 147 bp of DNA. In terms of processing, monoubiquitination of Lys-139 gives a specific tag for epigenetic transcriptional activation and is also prerequisite for histone H3 'Lys-4' and 'Lys-79' methylation. Phosphorylated on SPKK motifs 3, 4 and 5; which may regulate DNA binding. Dephosphorylated during maturation of spermatids to mature sperm and rephosphorylated at fertilization.

The protein localises to the nucleus. Its subcellular location is the chromosome. Its function is as follows. Core component of nucleosome. Nucleosomes wrap and compact DNA into chromatin, limiting DNA accessibility to the cellular machineries which require DNA as a template. Histones thereby play a central role in transcription regulation, DNA repair, DNA replication and chromosomal stability. DNA accessibility is regulated via a complex set of post-translational modifications of histones, also called histone code, and nucleosome remodeling. In Parechinus angulosus (Angulate sea urchin), this protein is Histone H2B.2, sperm.